Reading from the N-terminus, the 201-residue chain is 3-isopropylmalate dehydratase small subunit (201 aa).

The protein belongs to the LeuD family. LeuD type 1 subfamily. Heterodimer of LeuC and LeuD.

It catalyses the reaction (2R,3S)-3-isopropylmalate = (2S)-2-isopropylmalate. Its pathway is amino-acid biosynthesis; L-leucine biosynthesis; L-leucine from 3-methyl-2-oxobutanoate: step 2/4. In terms of biological role, catalyzes the isomerization between 2-isopropylmalate and 3-isopropylmalate, via the formation of 2-isopropylmaleate. This is 3-isopropylmalate dehydratase small subunit from Rhodopseudomonas palustris (strain BisB18).